Here is a 92-residue protein sequence, read N- to C-terminus: DNA-directed RNA polymerase subunit Rpo11 (92 aa).

The protein belongs to the archaeal Rpo11/eukaryotic RPB11/RPC19 RNA polymerase subunit family. As to quaternary structure, part of the RNA polymerase complex.

The protein localises to the cytoplasm. It carries out the reaction RNA(n) + a ribonucleoside 5'-triphosphate = RNA(n+1) + diphosphate. DNA-dependent RNA polymerase (RNAP) catalyzes the transcription of DNA into RNA using the four ribonucleoside triphosphates as substrates. The chain is DNA-directed RNA polymerase subunit Rpo11 from Halorubrum lacusprofundi (strain ATCC 49239 / DSM 5036 / JCM 8891 / ACAM 34).